The chain runs to 151 residues: Acidic phospholipase A2 1 (151 aa).

An N-terminal signal peptide occupies residues M1–S21. A propeptide spanning residues I22 to L27 is cleaved from the precursor. 7 disulfide bridges follow: C38-C104, C54-C151, C56-C72, C71-C132, C78-C125, C88-C118, and C111-C123. Ca(2+)-binding residues include Y55, G57, and G59. The active site involves H75. D76 is a Ca(2+) binding site. D126 is a catalytic residue.

Ca(2+) serves as cofactor. In terms of tissue distribution, expressed by the venom gland.

Its subcellular location is the secreted. It carries out the reaction a 1,2-diacyl-sn-glycero-3-phosphocholine + H2O = a 1-acyl-sn-glycero-3-phosphocholine + a fatty acid + H(+). Its function is as follows. Snake venom phospholipase A2 (PLA2) that may exhibit cardiotoxicity, myotoxicity, antiplatelet activity, and edema-inducing activity. PLA2 catalyzes the calcium-dependent hydrolysis of the 2-acyl groups in 3-sn-phosphoglycerides. This chain is Acidic phospholipase A2 1, found in Ophiophagus hannah (King cobra).